The primary structure comprises 533 residues: D-3-phosphoglycerate dehydrogenase (533 aa).

N-acetylalanine is present on alanine 2. The residue at position 14 (serine 14) is a Phosphoserine. Lysine 21 is subject to N6-acetyllysine; alternate. Lysine 21 is covalently cross-linked (Glycyl lysine isopeptide (Lys-Gly) (interchain with G-Cter in SUMO1); alternate). Lysine 21 is covalently cross-linked (Glycyl lysine isopeptide (Lys-Gly) (interchain with G-Cter in SUMO2); alternate). Lysine 58 is subject to N6-acetyllysine. NAD(+) contacts are provided by residues threonine 78, 155 to 156 (RI), aspartate 175, threonine 207, 234 to 236 (CAR), and aspartate 260. The residue at position 78 (threonine 78) is a Phosphothreonine. Residue arginine 236 is part of the active site. Glutamate 265 is a catalytic residue. Histidine 283 (proton donor) is an active-site residue. 283–286 (HLGA) serves as a coordination point for NAD(+).

It belongs to the D-isomer specific 2-hydroxyacid dehydrogenase family. Homotetramer.

It carries out the reaction (2R)-3-phosphoglycerate + NAD(+) = 3-phosphooxypyruvate + NADH + H(+). It catalyses the reaction (R)-2-hydroxyglutarate + NAD(+) = 2-oxoglutarate + NADH + H(+). The enzyme catalyses (S)-malate + NAD(+) = oxaloacetate + NADH + H(+). The protein operates within amino-acid biosynthesis; L-serine biosynthesis; L-serine from 3-phospho-D-glycerate: step 1/3. Its function is as follows. Catalyzes the reversible oxidation of 3-phospho-D-glycerate to 3-phosphonooxypyruvate, the first step of the phosphorylated L-serine biosynthesis pathway. Also catalyzes the reversible oxidation of 2-hydroxyglutarate to 2-oxoglutarate and the reversible oxidation of (S)-malate to oxaloacetate. The polypeptide is D-3-phosphoglycerate dehydrogenase (PHGDH) (Pan troglodytes (Chimpanzee)).